Consider the following 570-residue polypeptide: La-related protein 7 (570 aa).

Methionine 1 carries the post-translational modification N-acetylmethionine. Over residues 1-16 the composition is skewed to basic and acidic residues; the sequence is METENQKTMEESTKRK. 2 disordered regions span residues 1–24 and 180–364; these read METE…KRSR and LNNP…ERHK. The region spanning 22 to 116 is the HTH La-type RNA-binding domain; that stretch reads RSRVKQVLAD…KPLGERPKDE (95 aa). Positions 119-197 constitute an RRM domain; sequence RTVYVELLPK…PRKPGIFPKT (79 aa). Basic residues predominate over residues 213-222; the sequence is KKKKKKKGRI. Residue lysine 231 forms a Glycyl lysine isopeptide (Lys-Gly) (interchain with G-Cter in SUMO2) linkage. Residue threonine 251 is modified to Phosphothreonine. Phosphoserine is present on residues serine 253 and serine 256. The residue at position 260 (threonine 260) is a Phosphothreonine. Positions 286–295 are enriched in basic and acidic residues; sequence RAGKRERCSA. Residues serine 294 and serine 334 each carry the phosphoserine modification. Residue threonine 335 is modified to Phosphothreonine. A compositionally biased stretch (basic and acidic residues) spans 340–349; the sequence is ETDRKGDSLS. Serine 347 carries the phosphoserine modification. The span at 350–363 shows a compositional bias: basic residues; sequence KVKRKHKKKHKERH. Residue lysine 406 forms a Glycyl lysine isopeptide (Lys-Gly) (interchain with G-Cter in SUMO2) linkage. Positions 438-551 constitute a xRRM domain; that stretch reads QFVTGVIVKI…TEKLITKAEK (114 aa).

Belongs to the LARP7 family. Core component of the 7SK RNP complex, at least composed of 7SK RNA, LARP7, MEPCE, HEXIM1 (or HEXIM2) and P-TEFb (composed of CDK9 and CCNT1/cyclin-T1). Interacts with METTL16. Interacts with RBM7; upon genotoxic stress this interaction is enhanced, triggering the release of inactive P-TEFb complex from the core, yielding to P-TEFb complex activation. Associates with box C/D small nucleolar ribonucleoprotein (snoRNP) complexes.

It is found in the nucleus. The protein resides in the nucleoplasm. RNA-binding protein that specifically binds distinct small nuclear RNA (snRNAs) and regulates their processing and function. Specifically binds the 7SK snRNA (7SK RNA) and acts as a core component of the 7SK ribonucleoprotein (RNP) complex, thereby acting as a negative regulator of transcription elongation by RNA polymerase II. The 7SK RNP complex sequesters the positive transcription elongation factor b (P-TEFb) in a large inactive 7SK RNP complex preventing RNA polymerase II phosphorylation and subsequent transcriptional elongation. The 7SK RNP complex also promotes snRNA gene transcription by RNA polymerase II via interaction with the little elongation complex (LEC). LARP7 specifically binds to the highly conserved 3'-terminal U-rich stretch of 7SK RNA; on stimulation, remains associated with 7SK RNA, whereas P-TEFb is released from the complex. LARP7 also acts as a regulator of mRNA splicing fidelity by promoting U6 snRNA processing. Specifically binds U6 snRNAs and associates with a subset of box C/D RNP complexes: promotes U6 snRNA 2'-O-methylation by facilitating U6 snRNA loading into box C/D RNP complexes. U6 snRNA 2'-O-methylation is required for mRNA splicing fidelity. Binds U6 snRNAs with a 5'-CAGGG-3' sequence motif. U6 snRNA processing is required for spermatogenesis. The protein is La-related protein 7 of Mus musculus (Mouse).